Consider the following 621-residue polypeptide: Putative 5'-3' exonuclease R528 (621 aa).

The protein belongs to the 5'-3' exonuclease family.

It localises to the virion. The polypeptide is Putative 5'-3' exonuclease R528 (Acanthamoeba polyphaga mimivirus (APMV)).